A 411-amino-acid chain; its full sequence is MQKLLQKITQGSLVKQIMVGLVAGIIVALVSPATASAVGLLGALFVGALKAVAPVLVLVLVMASIANHKHGQKTNIRPILFLYLLGTFAAALVAVVVSFMFPSNLALVAGNAEINPPGGIIEVLKGLLLSVVANPFQALISANYIGILAWAVGLGLALRHSSDTTKSLINDMSHAVTMVVRAVIRCAPLGIFGLVASTLAETGFGALWGYAQLLVVLIGCMLLVALVLNPLIVFWKIRRNPYPLVFACLRESGVTAFFTRSSAANIPVNMELCKKLNLNEDTYSVSIPLGATINMAGAAITITVLTLAAVHTLGIPVDVPTALLLSVVAAVCACGASGVAGGSLLLIPLACNMFGIPNDVAMQVVAVGFIIGVLQDSAETALNSSTDVLFTAAACQAEDQRLADEDPLKVR.

Transmembrane regions (helical) follow at residues 17 to 37, 41 to 61, 79 to 99, 138 to 158, 189 to 209, 214 to 234, 295 to 315, and 327 to 347; these read IMVG…TASA, LGAL…LVLV, ILFL…VVSF, ALIS…GLAL, LGIF…ALWG, LVVL…LIVF, MAGA…TLGI, and VVAA…LLLI.

This sequence belongs to the dicarboxylate/amino acid:cation symporter (DAACS) (TC 2.A.23) family.

Its subcellular location is the cell inner membrane. The enzyme catalyses L-serine(in) + Na(+)(in) = L-serine(out) + Na(+)(out). The catalysed reaction is L-threonine(in) + Na(+)(in) = L-threonine(out) + Na(+)(out). Its function is as follows. Involved in the import of serine and threonine into the cell, with the concomitant import of sodium (symport system). This Serratia proteamaculans (strain 568) protein is Serine/threonine transporter SstT.